Consider the following 63-residue polypeptide: Small ribosomal subunit protein eS17 (63 aa).

It belongs to the eukaryotic ribosomal protein eS17 family.

In Methanococcus aeolicus (strain ATCC BAA-1280 / DSM 17508 / OCM 812 / Nankai-3), this protein is Small ribosomal subunit protein eS17.